The following is a 107-amino-acid chain: Iron-binding protein IscA (107 aa).

Fe cation-binding residues include cysteine 35, cysteine 99, and cysteine 101.

The protein belongs to the HesB/IscA family. As to quaternary structure, homodimer; may form tetramers and higher multimers. The cofactor is Fe cation.

Functionally, is able to transfer iron-sulfur clusters to apo-ferredoxin. Multiple cycles of [2Fe2S] cluster formation and transfer are observed, suggesting that IscA acts catalytically. Recruits intracellular free iron so as to provide iron for the assembly of transient iron-sulfur cluster in IscU in the presence of IscS, L-cysteine and the thioredoxin reductase system TrxA/TrxB. This chain is Iron-binding protein IscA, found in Klebsiella pneumoniae (strain 342).